Consider the following 620-residue polypeptide: uncharacterized protein (620 aa).

Low complexity-rich tracts occupy residues 278–290 (RPPS…AGEP) and 301–319 (ASTA…TRPT). The interval 278 to 620 (RPPSGSGEAA…KSQPPAAHTA (343 aa)) is disordered. Residues 336 to 411 (ARPESEEQTD…QESQVARRDE (76 aa)) are compositionally biased toward basic and acidic residues. Composition is skewed to pro residues over residues 446–470 (VPGP…PPMT) and 481–500 (RCPP…PPRP). Low complexity-rich tracts occupy residues 501–512 (SSDTPLSAVSRP) and 522–541 (TARV…YSPA). Over residues 542-551 (PLSPPSPVSP) the composition is skewed to pro residues. The segment covering 597 to 607 (SVPSSASPSAS) has biased composition (low complexity).

The protein belongs to the herpesviridae US22 family.

This is an uncharacterized protein from Homo sapiens (Human).